A 449-amino-acid chain; its full sequence is Glutamate--tRNA ligase 1 (449 aa).

Positions 11–21 match the 'HIGH' region motif; sequence PSPTGSLHVGN. Positions 242–246 match the 'KMSKS' region motif; it reads PLSKR. Lysine 245 is a binding site for ATP.

It belongs to the class-I aminoacyl-tRNA synthetase family. Glutamate--tRNA ligase type 1 subfamily. Monomer.

The protein resides in the cytoplasm. It carries out the reaction tRNA(Glu) + L-glutamate + ATP = L-glutamyl-tRNA(Glu) + AMP + diphosphate. Its function is as follows. Catalyzes the attachment of glutamate to tRNA(Glu) in a two-step reaction: glutamate is first activated by ATP to form Glu-AMP and then transferred to the acceptor end of tRNA(Glu). The chain is Glutamate--tRNA ligase 1 from Parvibaculum lavamentivorans (strain DS-1 / DSM 13023 / NCIMB 13966).